Consider the following 339-residue polypeptide: Dihydroorotase (339 aa).

Zn(2+) is bound by residues histidine 12 and histidine 14. Residues 14-16 (HVR) and asparagine 40 each bind substrate. Positions 94, 133, 167, and 239 each coordinate Zn(2+). Lysine 94 is subject to N6-carboxylysine. Histidine 133 is a binding site for substrate. Aspartate 239 is an active-site residue. Substrate contacts are provided by histidine 243 and alanine 255.

Belongs to the metallo-dependent hydrolases superfamily. DHOase family. Class II DHOase subfamily. In terms of assembly, homodimer. Zn(2+) serves as cofactor.

The enzyme catalyses (S)-dihydroorotate + H2O = N-carbamoyl-L-aspartate + H(+). Its pathway is pyrimidine metabolism; UMP biosynthesis via de novo pathway; (S)-dihydroorotate from bicarbonate: step 3/3. Its function is as follows. Catalyzes the reversible cyclization of carbamoyl aspartate to dihydroorotate. This is Dihydroorotase from Helicobacter pylori (strain HPAG1).